The chain runs to 274 residues: 3-methyl-2-oxobutanoate hydroxymethyltransferase (274 aa).

2 residues coordinate Mg(2+): aspartate 49 and aspartate 88. 3-methyl-2-oxobutanoate-binding positions include 49–50 (DS), aspartate 88, and lysine 118. Glutamate 120 contributes to the Mg(2+) binding site. Glutamate 187 (proton acceptor) is an active-site residue.

The protein belongs to the PanB family. Homodecamer; pentamer of dimers. Mg(2+) serves as cofactor.

It is found in the cytoplasm. The enzyme catalyses 3-methyl-2-oxobutanoate + (6R)-5,10-methylene-5,6,7,8-tetrahydrofolate + H2O = 2-dehydropantoate + (6S)-5,6,7,8-tetrahydrofolate. Its pathway is cofactor biosynthesis; (R)-pantothenate biosynthesis; (R)-pantoate from 3-methyl-2-oxobutanoate: step 1/2. Catalyzes the reversible reaction in which hydroxymethyl group from 5,10-methylenetetrahydrofolate is transferred onto alpha-ketoisovalerate to form ketopantoate. The sequence is that of 3-methyl-2-oxobutanoate hydroxymethyltransferase from Rhodopseudomonas palustris (strain ATCC BAA-98 / CGA009).